The primary structure comprises 368 residues: POU domain, class 3, transcription factor 1 (368 aa).

Polar residues predominate over residues 1–16 (MATTAQYIPRNNSLPS). 4 disordered regions span residues 1 to 28 (MATT…DRMH), 69 to 88 (TDWT…ASVQ), 100 to 134 (SHLV…NGHQ), and 147 to 193 (SPQP…PSSD). The segment covering 79–88 (QAEHNKASVQ) has biased composition (basic and acidic residues). Positions 105-134 (QPTQNSHHGSWAPTTTHHLSPLSPASNGHQ) are enriched in polar residues. Basic and acidic residues predominate over residues 155 to 170 (GLRDPLHDDAGSHDNQ). The POU-specific domain maps to 187-261 (EDAPSSDDLE…LLNKWLEETD (75 aa)). The segment at residues 279–338 (KRKKRTSIEVGVKGALENHFLKCPKPSAHEITTLAGTLQLEKEVVRVWFCNRRQKEKRMT) is a DNA-binding region (homeobox).

It belongs to the POU transcription factor family. Class-3 subfamily. In terms of tissue distribution, predominantly expressed in the embryonic and adult central nervous system.

It is found in the nucleus. Its function is as follows. Transcription factor that may play important roles in patterning the embryonic brain. Could directly respond to the reception of the sonic hedgehog (shh) signal. In Danio rerio (Zebrafish), this protein is POU domain, class 3, transcription factor 1 (pou3f1).